We begin with the raw amino-acid sequence, 465 residues long: MVQKKPAELQGFHRSFKGQNPFELAFSLDQPDHGDSDFGLQCSARPDMPASQPIDIPDAKKRGKKKKRGRATDSFSGRFEDVYQLQEDVLGEGAHARVQTCINLITSQEYAVKIIEKQPGHIRSRVFREVEMLYQCQGHRNVLELIEFFEEEDRFYLVFEKMRGGSILSHIHKRRHFNELEASVVVQDVASALDFLHNKGIAHRDLKPENILCEHPNQVSPVKICDFDLGSGIKLNGDCSPISTPELLTPCGSAEYMAPEVVEAFSEEASIYDKRCDLWSLGVILYILLSGYPPFVGRCGSDCGWDRGEACPACQNMLFESIQEGKYEFPDKDWAHISCAAKDLISKLLVRDAKQRLSAAQVLQHPWVQGCAPENTLPTPMVLQRNSCAKDLTSFAAEAIAMNRQLAQHDEDLAEEEAAGQGQPVLVRATSRCLQLSPPSQSKLAQRRQRASLSSAPVVLVGDHA.

A disordered region spans residues 23-72; the sequence is ELAFSLDQPDHGDSDFGLQCSARPDMPASQPIDIPDAKKRGKKKKRGRAT. The Nuclear localization signal signature appears at 60–66; that stretch reads KKRGKKK. A Phosphoserine modification is found at serine 74. The Protein kinase domain occupies 84 to 388; the sequence is QLQEDVLGEG…TPMVLQRNSC (305 aa). Residues 90 to 98 and lysine 113 contribute to the ATP site; that span reads LGEGAHARV. 160–162 provides a ligand contact to staurosporine; it reads EKM. Catalysis depends on aspartate 205, which acts as the Proton acceptor. Glutamate 209 serves as a coordination point for staurosporine. 2 positions are modified to phosphothreonine: threonine 244 and threonine 249. Residues cysteine 299, cysteine 311, and cysteine 314 each coordinate Zn(2+). Threonine 379 bears the Phosphothreonine mark. Serine 437 and serine 440 each carry phosphoserine. Residues 444-448 carry the MAP kinase binding motif; sequence LAQRR. Residue serine 452 is modified to Phosphoserine.

This sequence belongs to the protein kinase superfamily. CAMK Ser/Thr protein kinase family. As to quaternary structure, monomer. Interacts with the C-terminal regions of EIF4G1 and EIF4G2; this interaction is promoted when MAPK pathways are repressed but repressed upon ERK proteins activation. Also binds to dephosphorylated MAPK3/ERK1 and MAPK1/ERK2. Isoform 1 interaction with phosphorylated MAPK3/ERK1 and MAPK1/ERK2 protects it from dephosphorylation and inactivation. Isoform 2 interacts with ESR2 and EIF4E in the nucleus. The cofactor is Mg(2+). Zn(2+) serves as cofactor. Post-translationally, dual phosphorylation of Thr-244 and Thr-249 activates the kinase. Phosphorylation of Thr-379 activates the kinase. Phosphorylated upon arsenic trioxide As(2)O(3) treatment. Phosphorylated by MAPK1/ERK2, MAPK11 and MAPK14. Dephosphorylated by PP2A. As to expression, ubiquitously expressed in all tissues examined. Isoform 2 is expressed at higher levels in the ovary than is isoform 1.

Its subcellular location is the nucleus. The protein resides in the PML body. It is found in the cytoplasm. It carries out the reaction L-seryl-[protein] + ATP = O-phospho-L-seryl-[protein] + ADP + H(+). The catalysed reaction is L-threonyl-[protein] + ATP = O-phospho-L-threonyl-[protein] + ADP + H(+). Inhibited by CGP57380 and staurosporine. Activated by phosphorylation in a negative-feedback regulatory manner in response to chemotherapy (e.g. cytarabine) and thus impairs the generation of antileukemic responses. Its function is as follows. Serine/threonine-protein kinase that phosphorylates SFPQ/PSF, HNRNPA1 and EIF4E. May play a role in the response to environmental stress and cytokines. Appears to regulate translation by phosphorylating EIF4E, thus increasing the affinity of this protein for the 7-methylguanosine-containing mRNA cap. Required for mediating PP2A-inhibition-induced EIF4E phosphorylation. Triggers EIF4E shuttling from cytoplasm to nucleus. Isoform 1 displays a high basal kinase activity, but isoform 2 exhibits a very low kinase activity. Acts as a mediator of the suppressive effects of IFNgamma on hematopoiesis. Negative regulator for signals that control generation of arsenic trioxide As(2)O(3)-dependent apoptosis and anti-leukemic responses. Involved in anti-apoptotic signaling in response to serum withdrawal. The chain is MAP kinase-interacting serine/threonine-protein kinase 2 (MKNK2) from Homo sapiens (Human).